Consider the following 122-residue polypeptide: Protein GL2-INTERACTING REPRESSOR 1 (122 aa).

The segment covering 1–10 has biased composition (basic and acidic residues); that stretch reads MSRRSPKLEL. Residues 1–62 are disordered; that stretch reads MSRRSPKLEL…PSVRYSTSPE (62 aa). An EAR motif is present at residues 7–12; the sequence is KLELKL. The span at 27–46 shows a compositional bias: low complexity; the sequence is SPSRSATTSPTSPPSSCVSS. A compositionally biased stretch (polar residues) spans 47–62; that stretch reads EMNQDEPSVRYSTSPE.

In terms of assembly, interacts with GL2. Interacts with TPL. In terms of tissue distribution, expressed in root and shoot meristems.

It localises to the nucleus. In terms of biological role, acts as a negative regulator of root hair development redundantly with GIR2. GIR1 and GIR2 may function as adapter proteins that associate with GL2 and participate in the control of root hair formation. GIR1 and GIR2 may function as adapter proteins that associate with TPL and participate in the repression of root gene expression. The chain is Protein GL2-INTERACTING REPRESSOR 1 from Arabidopsis thaliana (Mouse-ear cress).